The primary structure comprises 434 residues: Histidinol dehydrogenase (434 aa).

NAD(+) is bound by residues tyrosine 130, glutamine 188, and asparagine 211. Residues serine 237, glutamine 259, and histidine 262 each coordinate substrate. Positions 259 and 262 each coordinate Zn(2+). Catalysis depends on proton acceptor residues glutamate 326 and histidine 327. The substrate site is built by histidine 327, aspartate 360, glutamate 414, and histidine 419. Aspartate 360 lines the Zn(2+) pocket. Residue histidine 419 participates in Zn(2+) binding.

This sequence belongs to the histidinol dehydrogenase family. As to quaternary structure, homodimer. It depends on Zn(2+) as a cofactor.

The catalysed reaction is L-histidinol + 2 NAD(+) + H2O = L-histidine + 2 NADH + 3 H(+). It participates in amino-acid biosynthesis; L-histidine biosynthesis; L-histidine from 5-phospho-alpha-D-ribose 1-diphosphate: step 9/9. Its function is as follows. Catalyzes the sequential NAD-dependent oxidations of L-histidinol to L-histidinaldehyde and then to L-histidine. In Salmonella paratyphi A (strain ATCC 9150 / SARB42), this protein is Histidinol dehydrogenase.